The following is a 644-amino-acid chain: Chaperone protein HtpG (644 aa).

The tract at residues 1–352 (MNARVEQLEF…AQDMSLNVSR (352 aa)) is a; substrate-binding. Positions 353–566 (EILQQDRQIK…AFGITPALAR (214 aa)) are b. The tract at residues 567–644 (LYRASGQDIP…ILADRLARTL (78 aa)) is c.

Belongs to the heat shock protein 90 family. Homodimer.

The protein localises to the cytoplasm. Functionally, molecular chaperone. Has ATPase activity. The chain is Chaperone protein HtpG from Mycolicibacterium paratuberculosis (strain ATCC BAA-968 / K-10) (Mycobacterium paratuberculosis).